The primary structure comprises 176 residues: Adenine phosphoribosyltransferase (176 aa).

It belongs to the purine/pyrimidine phosphoribosyltransferase family. As to quaternary structure, homodimer.

Its subcellular location is the cytoplasm. The catalysed reaction is AMP + diphosphate = 5-phospho-alpha-D-ribose 1-diphosphate + adenine. The protein operates within purine metabolism; AMP biosynthesis via salvage pathway; AMP from adenine: step 1/1. Functionally, catalyzes a salvage reaction resulting in the formation of AMP, that is energically less costly than de novo synthesis. This is Adenine phosphoribosyltransferase from Thermobifida fusca (strain YX).